A 94-amino-acid polypeptide reads, in one-letter code: MSEEKPREGVKTENDHINLKVAGQDGSVVQFKIKRHTPLSKLMKAYCERQGLSIRQIRFRFDGQPINETDTPAQLEMEDEDTIDVFQQQTGGSC.

Residue lysine 11 forms a Glycyl lysine isopeptide (Lys-Gly) (interchain with G-Cter in SUMO) linkage. In terms of domain architecture, Ubiquitin-like spans 15–92 (DHINLKVAGQ…IDVFQQQTGG (78 aa)). Residue glycine 92 forms a Glycyl lysine isopeptide (Gly-Lys) (interchain with K-? in acceptor proteins) linkage. Residues 93 to 94 (SC) constitute a propeptide that is removed on maturation.

The protein belongs to the ubiquitin family. SUMO subfamily. Interacts with sae2 and ube2i. Covalently attached to a number of proteins. Polymeric chains can be formed through Lys-11 cross-linking. In terms of processing, cleavage of precursor form by a sentrin-specific protease is necessary for function.

Its subcellular location is the cytoplasm. The protein localises to the nucleus. It localises to the PML body. Functionally, ubiquitin-like protein which can be covalently attached to target lysines either as a monomer or as a lysine-linked polymer. Does not seem to be involved in protein degradation and may function as an antagonist of ubiquitin in the degradation process. Plays a role in a number of cellular processes such as nuclear transport, DNA replication and repair, mitosis and signal transduction. Covalent attachment to its substrates requires prior activation by the E1 complex sae1-sae2 and linkage to the E2 enzyme ube2i. The protein is Small ubiquitin-related modifier 3 (sumo3) of Danio rerio (Zebrafish).